A 121-amino-acid polypeptide reads, in one-letter code: Flagellar protein FliT (121 aa).

The segment at 1-50 (MNNAPHLYFAWQQLVEKSQLMLRLATEEQWDELIASEMAYVNAVQEIAHL) is required for homodimerization. Residues 60–98 (MQEQLRPMLRLILDNESKVKQLLQIRMDELAKLVGQSSV) form a fliD binding region.

It belongs to the FliT family. Homodimer. Interacts with FliD and FlhC.

It is found in the cytoplasm. The protein localises to the cytosol. Its function is as follows. Dual-function protein that regulates the transcription of class 2 flagellar operons and that also acts as an export chaperone for the filament-capping protein FliD. As a transcriptional regulator, acts as an anti-FlhDC factor; it directly binds FlhC, thus inhibiting the binding of the FlhC/FlhD complex to class 2 promoters, resulting in decreased expression of class 2 flagellar operons. As a chaperone, effects FliD transition to the membrane by preventing its premature polymerization, and by directing it to the export apparatus. The sequence is that of Flagellar protein FliT from Escherichia coli O9:H4 (strain HS).